The sequence spans 320 residues: Endochitinase (320 aa).

The N-terminal stretch at 1-23 is a signal peptide; that stretch reads MKRTLKVSFFILCLLPLFLGSKA. One can recognise a Chitin-binding type-1 domain in the interval 24–64; it reads EQCGSQAGGAVCPNGLCCSKFGFCGSTDPYCGDGCQSQCKS. 7 cysteine pairs are disulfide-bonded: Cys-26–Cys-41, Cys-35–Cys-47, Cys-40–Cys-54, Cys-58–Cys-62, Cys-101–Cys-163, Cys-175–Cys-182, and Cys-281–Cys-313. The active-site Proton donor is the Glu-145.

This sequence belongs to the glycosyl hydrolase 19 family. Chitinase class I subfamily.

It carries out the reaction Random endo-hydrolysis of N-acetyl-beta-D-glucosaminide (1-&gt;4)-beta-linkages in chitin and chitodextrins.. Its function is as follows. Defense against chitin-containing fungal pathogens. In Pisum sativum (Garden pea), this protein is Endochitinase.